A 36-amino-acid polypeptide reads, in one-letter code: U-metritoxin-Msn1a (36 aa).

The ShKT domain occupies 4-36 (CKDKLPACGEYRGSFCKLEKVKSNCEKTCGVKC). Cystine bridges form between C4/C36, C11/C28, and C19/C32.

The protein belongs to the sea anemone type 1 potassium channel toxin family. Type 1b subfamily.

Its subcellular location is the secreted. The protein resides in the nematocyst. Has hemolytic activity. Inhibits voltage-gated potassium channels (Kv1/KCNA). This chain is U-metritoxin-Msn1a, found in Metridium senile (Brown sea anemone).